The chain runs to 965 residues: 26S proteasome non-ATPase regulatory subunit 1 (965 aa).

PC repeat units lie at residues 380-413 (NAVA…EGFG), 418-452 (GAML…EPVR), 454-488 (GACL…VSGE), 489-523 (SAGI…DKTQ), 560-595 (TGIC…DVKR), 630-664 (GAAM…FVRK), 665-706 (GALL…SLVK), and 708-738 (GAII…DMGS). The span at 836–856 (ASASSAAAAPSSSSTSGTAPA) shows a compositional bias: low complexity. Disordered stretches follow at residues 836 to 889 (ASAS…LQNP) and 943 to 965 (TPAS…INDF). A compositionally biased stretch (basic and acidic residues) spans 863 to 882 (EVDQPGKSKKEKAPEKDTKP).

The protein belongs to the proteasome subunit S1 family.

Functionally, acts as a regulatory subunit of the 26 proteasome which is involved in the ATP-dependent degradation of ubiquitinated proteins. This Caenorhabditis elegans protein is 26S proteasome non-ATPase regulatory subunit 1 (rpn-2).